The following is a 185-amino-acid chain: Photosystem I assembly protein Ycf4 (185 aa).

Helical transmembrane passes span 21–43 and 68–90; these read NFFW…ISSY and FYGI…NVGS.

Belongs to the Ycf4 family.

The protein localises to the plastid. It is found in the chloroplast thylakoid membrane. Its function is as follows. Seems to be required for the assembly of the photosystem I complex. This chain is Photosystem I assembly protein Ycf4, found in Aegilops tauschii (Tausch's goatgrass).